The primary structure comprises 234 residues: Octanoyltransferase (234 aa).

Residues Asp-35–Leu-221 form the BPL/LPL catalytic domain. Substrate-binding positions include Arg-74 to His-81, Ala-150 to Gly-152, and Gly-163 to Ser-165. Catalysis depends on Cys-181, which acts as the Acyl-thioester intermediate.

The protein belongs to the LipB family.

The protein resides in the cytoplasm. It catalyses the reaction octanoyl-[ACP] + L-lysyl-[protein] = N(6)-octanoyl-L-lysyl-[protein] + holo-[ACP] + H(+). It participates in protein modification; protein lipoylation via endogenous pathway; protein N(6)-(lipoyl)lysine from octanoyl-[acyl-carrier-protein]: step 1/2. Catalyzes the transfer of endogenously produced octanoic acid from octanoyl-acyl-carrier-protein onto the lipoyl domains of lipoate-dependent enzymes. Lipoyl-ACP can also act as a substrate although octanoyl-ACP is likely to be the physiological substrate. The sequence is that of Octanoyltransferase from Hyphomonas neptunium (strain ATCC 15444).